The chain runs to 239 residues: Small ribosomal subunit protein uS2 (239 aa).

This sequence belongs to the universal ribosomal protein uS2 family.

The chain is Small ribosomal subunit protein uS2 from Francisella philomiragia subsp. philomiragia (strain ATCC 25017 / CCUG 19701 / FSC 153 / O#319-036).